The chain runs to 427 residues: Trigger factor (427 aa).

The PPIase FKBP-type domain occupies 163 to 248 (GDTVVIDFVG…VHEVKAKEVP (86 aa)).

This sequence belongs to the FKBP-type PPIase family. Tig subfamily.

It localises to the cytoplasm. It carries out the reaction [protein]-peptidylproline (omega=180) = [protein]-peptidylproline (omega=0). Its function is as follows. Involved in protein export. Acts as a chaperone by maintaining the newly synthesized protein in an open conformation. Functions as a peptidyl-prolyl cis-trans isomerase. This Streptococcus equi subsp. zooepidemicus (strain H70) protein is Trigger factor.